The chain runs to 214 residues: Refilin-B (214 aa).

The interval 1-56 is disordered; it reads MVGRLSLQDVPELVDAKKKGDGVLDSPDSGLPPSPSPSHWGLAAGGGGGERAAAPG. Phosphoserine occurs at positions 6 and 26.

This sequence belongs to the Refilin family. As to quaternary structure, interacts with FLNA and FLNB.

The protein resides in the cytoplasm. Its subcellular location is the cytoskeleton. Functionally, involved in the regulation of the perinuclear actin network and nuclear shape through interaction with filamins. Plays an essential role in the formation of cartilaginous skeletal elements. The polypeptide is Refilin-B (Homo sapiens (Human)).